The following is a 156-amino-acid chain: Ribosomal RNA large subunit methyltransferase H (156 aa).

Residues Leu73, Gly104, and 123-128 (LSPLTL) each bind S-adenosyl-L-methionine.

This sequence belongs to the RNA methyltransferase RlmH family. As to quaternary structure, homodimer.

It is found in the cytoplasm. It catalyses the reaction pseudouridine(1915) in 23S rRNA + S-adenosyl-L-methionine = N(3)-methylpseudouridine(1915) in 23S rRNA + S-adenosyl-L-homocysteine + H(+). Its function is as follows. Specifically methylates the pseudouridine at position 1915 (m3Psi1915) in 23S rRNA. The chain is Ribosomal RNA large subunit methyltransferase H from Pectobacterium carotovorum subsp. carotovorum (strain PC1).